Here is a 78-residue protein sequence, read N- to C-terminus: Small ribosomal subunit protein uS17 (78 aa).

Belongs to the universal ribosomal protein uS17 family. As to quaternary structure, part of the 30S ribosomal subunit.

One of the primary rRNA binding proteins, it binds specifically to the 5'-end of 16S ribosomal RNA. This chain is Small ribosomal subunit protein uS17, found in Maricaulis maris (strain MCS10) (Caulobacter maris).